A 306-amino-acid chain; its full sequence is UDP-3-O-acyl-N-acetylglucosamine deacetylase (306 aa).

Positions 79, 239, and 243 each coordinate Zn(2+). The Proton donor role is filled by His266.

The protein belongs to the LpxC family. The cofactor is Zn(2+).

The enzyme catalyses a UDP-3-O-[(3R)-3-hydroxyacyl]-N-acetyl-alpha-D-glucosamine + H2O = a UDP-3-O-[(3R)-3-hydroxyacyl]-alpha-D-glucosamine + acetate. It participates in glycolipid biosynthesis; lipid IV(A) biosynthesis; lipid IV(A) from (3R)-3-hydroxytetradecanoyl-[acyl-carrier-protein] and UDP-N-acetyl-alpha-D-glucosamine: step 2/6. In terms of biological role, catalyzes the hydrolysis of UDP-3-O-myristoyl-N-acetylglucosamine to form UDP-3-O-myristoylglucosamine and acetate, the committed step in lipid A biosynthesis. This chain is UDP-3-O-acyl-N-acetylglucosamine deacetylase, found in Haemophilus ducreyi (strain 35000HP / ATCC 700724).